The primary structure comprises 194 residues: Imidazoleglycerol-phosphate dehydratase (194 aa).

Belongs to the imidazoleglycerol-phosphate dehydratase family.

It is found in the cytoplasm. It carries out the reaction D-erythro-1-(imidazol-4-yl)glycerol 3-phosphate = 3-(imidazol-4-yl)-2-oxopropyl phosphate + H2O. The protein operates within amino-acid biosynthesis; L-histidine biosynthesis; L-histidine from 5-phospho-alpha-D-ribose 1-diphosphate: step 6/9. The polypeptide is Imidazoleglycerol-phosphate dehydratase (Bacillus cereus (strain AH187)).